The following is a 97-amino-acid chain: Defensin-like protein 246 (97 aa).

Positions 1–24 (MKFVAIFLVTCVLFSLFPSHLSQG) are cleaved as a signal peptide. Cystine bridges form between C39/C96, C50/C79, C58/C89, and C77/C91.

It belongs to the DEFL family. As to expression, flower buds and stems.

The protein resides in the secreted. The protein is Defensin-like protein 246 (SCRL5) of Arabidopsis thaliana (Mouse-ear cress).